Here is a 303-residue protein sequence, read N- to C-terminus: MMSESNKQQAVNKLTEIVANFTAMISTRMPDDVVDKLKQLKDAETSSMGKIIYHTMFDNMQKAIDLNRPACQDTGEIMFFVKVGSRFPLLGELQSILKQAVEEATVKAPLRHNAVEIFDEVNTGKNTGSGVPWVTWDIVPDGDDAEIEVYMAGGGCTLPGRSKVLMPSEGYEGVVKFVFENISTLAVNACPPVLVGVGIATSVETAAVLSRKAILRPIGSRHPNPKAAELELRLEEGLNRLGIGPQGLTGNSSVMGVHIESAARHPSTIGVAVSTGCWAHRRGTLRVHADLTFENLSHTRSAL.

Iron-sulfur cluster-binding residues include C71, C190, and C277.

The protein belongs to the class-I fumarase family. In terms of assembly, tetramer of two alpha and two beta subunits. Requires iron-sulfur cluster as cofactor.

It catalyses the reaction (2R,3R)-tartrate = oxaloacetate + H2O. The polypeptide is L(+)-tartrate dehydratase subunit alpha (ttdA) (Escherichia coli O6:H1 (strain CFT073 / ATCC 700928 / UPEC)).